Reading from the N-terminus, the 88-residue chain is Small ribosomal subunit protein bS16 (88 aa).

This sequence belongs to the bacterial ribosomal protein bS16 family.

This is Small ribosomal subunit protein bS16 from Sorangium cellulosum (strain So ce56) (Polyangium cellulosum (strain So ce56)).